Here is a 32-residue protein sequence, read N- to C-terminus: Photosystem I reaction center subunit XII (32 aa).

The chain crosses the membrane as a helical span at residues 10-27 (VVALVSAFVTGILALRLG).

It belongs to the PsaM family.

It localises to the plastid. The protein resides in the chloroplast thylakoid membrane. In Staurastrum punctulatum (Green alga), this protein is Photosystem I reaction center subunit XII.